The sequence spans 205 residues: Phosphoenolpyruvate guanylyltransferase (205 aa).

Phosphoenolpyruvate is bound by residues Thr137, Gly153, and Ser156.

Belongs to the CofC family.

It catalyses the reaction phosphoenolpyruvate + GTP + H(+) = enolpyruvoyl-2-diphospho-5'-guanosine + diphosphate. It functions in the pathway cofactor biosynthesis; coenzyme F420 biosynthesis. Guanylyltransferase that catalyzes the activation of phosphoenolpyruvate (PEP) as enolpyruvoyl-2-diphospho-5'-guanosine, via the condensation of PEP with GTP. It is involved in the biosynthesis of coenzyme F420, a hydride carrier cofactor. The protein is Phosphoenolpyruvate guanylyltransferase of Rubrobacter xylanophilus (strain DSM 9941 / JCM 11954 / NBRC 16129 / PRD-1).